A 428-amino-acid chain; its full sequence is Nucleotidyltransferase MB21D2 (428 aa).

The disordered stretch occupies residues 366–389; it reads QRRGSTTSIPSPQSDGGDPNQPDD. Residues 368–379 are compositionally biased toward polar residues; the sequence is RGSTTSIPSPQS. A Phosphothreonine modification is found at T372. A phosphoserine mark is found at S373, S376, and S379.

The protein belongs to the mab-21 family.

Probable nucleotidyltransferase that catalyzes the formation of cyclic dinucleotide second messenger in response to some unknown stimulus. The protein is Nucleotidyltransferase MB21D2 of Mus musculus (Mouse).